A 167-amino-acid polypeptide reads, in one-letter code: MNTLVDLNDKVIRGYLISLVGEEGLRMIEEMPEGEVTDEEIAAKTGVLLNTVRRTLFILYENKFAICRRERDSNSGWLTYLWHLDFSDVEHQLMREKKKLLRNLKTRLEFEENNVFYVCPQGCVRLLFDEATETEFLCPMCGEDLVYYDNSRFVSALKKRVDALSSV.

One can recognise an HTH TFE/IIEalpha-type domain in the interval 8 to 90 (NDKVIRGYLI…LWHLDFSDVE (83 aa)).

It belongs to the TFE family. As to quaternary structure, monomer. Interaction with RNA polymerase subunits RpoF and RpoE is necessary for Tfe stimulatory transcription activity. Able to interact with Tbp and RNA polymerase in the absence of DNA promoter. Interacts both with the preinitiation and elongation complexes.

Transcription factor that plays a role in the activation of archaeal genes transcribed by RNA polymerase. Facilitates transcription initiation by enhancing TATA-box recognition by TATA-box-binding protein (Tbp), and transcription factor B (Tfb) and RNA polymerase recruitment. Not absolutely required for transcription in vitro, but particularly important in cases where Tbp or Tfb function is not optimal. It dynamically alters the nucleic acid-binding properties of RNA polymerases by stabilizing the initiation complex and destabilizing elongation complexes. Seems to translocate with the RNA polymerase following initiation and acts by binding to the non template strand of the transcription bubble in elongation complexes. The chain is Transcription factor E from Methanosarcina acetivorans (strain ATCC 35395 / DSM 2834 / JCM 12185 / C2A).